Consider the following 549-residue polypeptide: Chaperonin GroEL (549 aa).

ATP contacts are provided by residues 30 to 33 (TLGP), lysine 51, 87 to 91 (DGTTT), glycine 415, and aspartate 497.

This sequence belongs to the chaperonin (HSP60) family. As to quaternary structure, forms a cylinder of 14 subunits composed of two heptameric rings stacked back-to-back. Interacts with the co-chaperonin GroES.

The protein resides in the cytoplasm. It carries out the reaction ATP + H2O + a folded polypeptide = ADP + phosphate + an unfolded polypeptide.. In terms of biological role, together with its co-chaperonin GroES, plays an essential role in assisting protein folding. The GroEL-GroES system forms a nano-cage that allows encapsulation of the non-native substrate proteins and provides a physical environment optimized to promote and accelerate protein folding. This chain is Chaperonin GroEL, found in Pectobacterium atrosepticum (strain SCRI 1043 / ATCC BAA-672) (Erwinia carotovora subsp. atroseptica).